Consider the following 235-residue polypeptide: Ion-translocating oxidoreductase complex subunit E (235 aa).

The next 5 helical transmembrane spans lie at 63–83 (LGLG…ISLF), 93–113 (IPIY…LMNA), 117–137 (TLYQ…IIIG), 152–172 (IWDG…LGAL), and 206–226 (SFLL…LLAI).

It belongs to the NqrDE/RnfAE family. The complex is composed of six subunits: RnfA, RnfB, RnfC, RnfD, RnfE and RnfG.

It localises to the cell inner membrane. Its function is as follows. Part of a membrane-bound complex that couples electron transfer with translocation of ions across the membrane. The sequence is that of Ion-translocating oxidoreductase complex subunit E from Haemophilus influenzae (strain ATCC 51907 / DSM 11121 / KW20 / Rd).